Reading from the N-terminus, the 514-residue chain is Exoglucanase 1 (514 aa).

Positions 1 to 17 (MYQKLALISAFLATARA) are cleaved as a signal peptide. Residues 18 to 453 (QSACTLQAET…GSTGNSSGGN (436 aa)) are catalytic. Cystine bridges form between Cys21/Cys89, Cys36/Cys42, Cys67/Cys88, Cys78/Cys84, Cys155/Cys414, Cys189/Cys227, Cys193/Cys226, Cys247/Cys273, Cys255/Cys260, and Cys278/Cys348. N-linked (GlcNAc...) asparagine glycans are attached at residues Asn62 and Asn81. The active-site Nucleophile is the Glu229. Glu234 serves as the catalytic Proton donor. Asn287 carries N-linked (GlcNAc...) asparagine glycosylation. 2 disordered regions span residues 401–427 (NETSSTPGAVRGSCSTSSGVPAQLESN) and 444–481 (GSTGNSSGGNPPGGNPPGTTTTRRPATSTGSSPGPTQT). Residues 454–478 (PPGGNPPGTTTTRRPATSTGSSPGP) form a linker region. Residues 460–479 (PGTTTTRRPATSTGSSPGPT) show a composition bias toward low complexity. In terms of domain architecture, CBM1 spans 478–514 (PTQTHYGQCGGIGYSGPTVCASGSTCQVLNPYYSQCL). 2 disulfides stabilise this stretch: Cys486–Cys503 and Cys497–Cys513.

This sequence belongs to the glycosyl hydrolase 7 (cellulase C) family.

It catalyses the reaction Hydrolysis of (1-&gt;4)-beta-D-glucosidic linkages in cellulose and cellotetraose, releasing cellobiose from the non-reducing ends of the chains.. Its function is as follows. The biological conversion of cellulose to glucose generally requires three types of hydrolytic enzymes: (1) Endoglucanases which cut internal beta-1,4-glucosidic bonds; (2) Exocellobiohydrolases that cut the disaccharide cellobiose from the non-reducing end of the cellulose polymer chain; (3) Beta-1,4-glucosidases which hydrolyze the cellobiose and other short cello-oligosaccharides to glucose. This is Exoglucanase 1 (cbh1) from Hypocrea rufa (Trichoderma viride).